Reading from the N-terminus, the 426-residue chain is Alpha-ionylideneethane synthase abl3 (426 aa).

It belongs to the alpha-ionylideneethane synthase family.

The protein operates within hormone biosynthesis. In terms of biological role, alpha-ionylideneethane synthase; part of the gene cluster that mediates the biosynthesis of abscisic acid (ABA), a phytohormone that acts antagonistically toward salicylic acid (SA), jasmonic acid (JA) and ethylene (ETH) signaling, to impede plant defense responses. The first step of the pathway catalyzes the reaction from farnesyl diphosphate to alpha-ionylideneethane performed by the alpha-ionylideneethane synthase abl3 via a three-step reaction mechanism involving 2 neutral intermediates, beta-farnesene and allofarnesene. The cytochrome P450 monooxygenase abl1 might then be involved in the conversion of alpha-ionylideneethane to alpha-ionylideneacetic acid. Alpha-ionylideneacetic acid is further converted to abscisic acid in 2 steps involving the cytochrome P450 monooxygenase abl2 and the short-chain dehydrogenase/reductase abl4, via the intermediates 1'-deoxy-ABA or 1',4'-trans-diol-ABA, depending on the order of action of these 2 enzymes. Abl2 is responsible for the hydroxylation of carbon atom C-1' and abl4 might be involved in the oxidation of the C-4' carbon atom. In Leptosphaeria maculans (strain JN3 / isolate v23.1.3 / race Av1-4-5-6-7-8) (Blackleg fungus), this protein is Alpha-ionylideneethane synthase abl3.